A 1380-amino-acid polypeptide reads, in one-letter code: DNA-directed RNA polymerase subunit beta (1380 aa).

This sequence belongs to the RNA polymerase beta chain family. As to quaternary structure, the RNAP catalytic core consists of 2 alpha, 1 beta, 1 beta' and 1 omega subunit. When a sigma factor is associated with the core the holoenzyme is formed, which can initiate transcription.

The enzyme catalyses RNA(n) + a ribonucleoside 5'-triphosphate = RNA(n+1) + diphosphate. Functionally, DNA-dependent RNA polymerase catalyzes the transcription of DNA into RNA using the four ribonucleoside triphosphates as substrates. The chain is DNA-directed RNA polymerase subunit beta from Ehrlichia chaffeensis (strain ATCC CRL-10679 / Arkansas).